A 544-amino-acid chain; its full sequence is CTP synthase (544 aa).

The amidoligase domain stretch occupies residues 1-265 (MTKFIFVTGG…DNIITEQLQL (265 aa)). S13 provides a ligand contact to CTP. S13 lines the UTP pocket. ATP-binding positions include 14–19 (SLGKGI) and D71. Mg(2+)-binding residues include D71 and E139. Residues 146–148 (DIE), 186–191 (KTKPTQ), and K222 each bind CTP. Residues 186–191 (KTKPTQ) and K222 each bind UTP. Residues 290–544 (KIAMVGKYVD…VKAALNNKKA (255 aa)) form the Glutamine amidotransferase type-1 domain. G353 serves as a coordination point for L-glutamine. The active-site Nucleophile; for glutamine hydrolysis is the C380. Residues 381-384 (LGMQ), E404, and R471 contribute to the L-glutamine site. Residues H517 and E519 contribute to the active site.

This sequence belongs to the CTP synthase family. In terms of assembly, homotetramer.

The enzyme catalyses UTP + L-glutamine + ATP + H2O = CTP + L-glutamate + ADP + phosphate + 2 H(+). It catalyses the reaction L-glutamine + H2O = L-glutamate + NH4(+). The catalysed reaction is UTP + NH4(+) + ATP = CTP + ADP + phosphate + 2 H(+). It functions in the pathway pyrimidine metabolism; CTP biosynthesis via de novo pathway; CTP from UDP: step 2/2. With respect to regulation, allosterically activated by GTP, when glutamine is the substrate; GTP has no effect on the reaction when ammonia is the substrate. The allosteric effector GTP functions by stabilizing the protein conformation that binds the tetrahedral intermediate(s) formed during glutamine hydrolysis. Inhibited by the product CTP, via allosteric rather than competitive inhibition. In terms of biological role, catalyzes the ATP-dependent amination of UTP to CTP with either L-glutamine or ammonia as the source of nitrogen. Regulates intracellular CTP levels through interactions with the four ribonucleotide triphosphates. This Neisseria gonorrhoeae (strain ATCC 700825 / FA 1090) protein is CTP synthase.